Consider the following 86-residue polypeptide: Anti-adapter protein IraP (86 aa).

Residues 1 to 42 adopt a coiled-coil conformation; the sequence is MKNLIAELLVKLAQKEEESKELVAQVEALEIVVTALLRQMAQ.

This sequence belongs to the IraP family. In terms of assembly, interacts with RssB.

The protein resides in the cytoplasm. Functionally, inhibits RpoS proteolysis by regulating RssB activity, thereby increasing the stability of the sigma stress factor RpoS especially during phosphate starvation, but also in stationary phase and during nitrogen starvation. Its effect on RpoS stability is due to its interaction with RssB, which probably blocks the interaction of RssB with RpoS, and the consequent delivery of the RssB-RpoS complex to the ClpXP protein degradation pathway. The chain is Anti-adapter protein IraP from Enterobacter sp. (strain 638).